The primary structure comprises 526 residues: PTS system alpha-glucoside-specific EIICB component (526 aa).

A PTS EIIC type-1 domain is found at Met-1–Asp-417. Transmembrane regions (helical) follow at residues Leu-12 to Leu-32, Gly-59 to Ala-79, Leu-88 to Trp-108, Ile-132 to Ile-152, Leu-173 to Trp-193, Ile-200 to Phe-220, Ile-224 to Val-244, Gly-274 to Met-294, Ile-305 to Pro-325, Phe-330 to Ala-350, Phe-355 to Leu-375, and Gly-381 to Phe-401. The PTS EIIB type-1 domain occupies Ser-447–Asn-526. Cys-469 functions as the Phosphocysteine intermediate; for EIIB activity in the catalytic mechanism.

The protein resides in the cell membrane. Functionally, the phosphoenolpyruvate-dependent sugar phosphotransferase system (sugar PTS), a major carbohydrate active -transport system, catalyzes the phosphorylation of incoming sugar substrates concomitantly with their translocation across the cell membrane. This system is involved in alpha-glucoside transport. This is PTS system alpha-glucoside-specific EIICB component (malB) from Fusobacterium mortiferum.